The primary structure comprises 782 residues: Coiled-coil alpha-helical rod protein 1 (782 aa).

Basic and acidic residues-rich tracts occupy residues 62–74 (ERDV…EPGR) and 208–218 (ETRRAGEAKEL). Disordered regions lie at residues 62-82 (ERDV…WGLE) and 191-218 (SSLT…AKEL). 3 coiled-coil regions span residues 82–314 (EGSQ…ELTR), 344–435 (LMVQ…VVNA), and 498–691 (VADV…QQEG).

The protein localises to the cytoplasm. Its subcellular location is the nucleus. Functionally, may be a regulator of keratinocyte proliferation or differentiation. This Pongo pygmaeus (Bornean orangutan) protein is Coiled-coil alpha-helical rod protein 1 (CCHCR1).